A 389-amino-acid polypeptide reads, in one-letter code: Chalcone synthase (389 aa).

Cys-164 is a catalytic residue.

Belongs to the thiolase-like superfamily. Chalcone/stilbene synthases family.

The enzyme catalyses (E)-4-coumaroyl-CoA + 3 malonyl-CoA + 3 H(+) = 2',4,4',6'-tetrahydroxychalcone + 3 CO2 + 4 CoA. It functions in the pathway secondary metabolite biosynthesis; flavonoid biosynthesis. Functionally, the primary product of this enzyme is 4,2',4',6'-tetrahydroxychalcone (also termed naringenin-chalcone or chalcone) which can under specific conditions spontaneously isomerize into naringenin. The polypeptide is Chalcone synthase (CHS1) (Casuarina glauca (Swamp oak)).